A 76-amino-acid chain; its full sequence is Putative small nuclear ribonucleoprotein G-like protein 15 (76 aa).

In terms of domain architecture, Sm spans 4–76; sequence AHPPELKKFT…IIMLEALERV (73 aa).

The protein belongs to the snRNP Sm proteins family.

The protein resides in the nucleus. Associated with snRNP U1, U2, U4/U6 and U5. This Homo sapiens (Human) protein is Putative small nuclear ribonucleoprotein G-like protein 15 (SNRPGP15).